The sequence spans 379 residues: MVSKPHGGKLVRRLVAERTRERILSEQKEYPSVKIDHGRAIDLENIAHGVYSPLKGFLTSDDFQSVLDHMRLSDDTPWTIPIVIDIVEKTFDEGDAVLLYYEDIPIARMHVEEIYTYDKREFAQKVFKTTDPNHPGVAKVYSLGKYLVGGEIELLNEVPNPFAKYTLRPVETRVLFKERGWRTIVAFQTRNAPHVGHEYVQKAALTFVDGLFINPVLGKKKKGDYKDEVIIKAYETLFEHYYPKNAATLATVRYEMRYAGPREAIHHAIMRKNFGATHFIVGRDHAGVGDYYGPYEAWDMFENFPDLGITPMFIREAFYCRKCGGMVNAKICPHPKEFHVRISGTKLRKMIMAGEQPPEYMMRPEVYEVIRSFEKPFVE.

The protein belongs to the sulfate adenylyltransferase family.

It carries out the reaction sulfate + ATP + H(+) = adenosine 5'-phosphosulfate + diphosphate. It functions in the pathway sulfur metabolism; hydrogen sulfide biosynthesis; sulfite from sulfate: step 1/3. This is Sulfate adenylyltransferase from Thermococcus onnurineus (strain NA1).